The primary structure comprises 444 residues: Multidrug resistance protein MdtA (444 aa).

An N-terminal signal peptide occupies residues 1 to 20 (MKSQSKRTSRLFVFVGVVVA). Over residues 37 to 52 (NNTSGAQQSARGQDTS) the composition is skewed to polar residues. Disordered stretches follow at residues 37–60 (NNTS…RNTP) and 398–444 (TPRS…AEKS). Over residues 406–419 (ANPASAEKAAAEAE) the composition is skewed to low complexity. Positions 435 to 444 (ARSTTAAEKS) are enriched in polar residues.

It belongs to the membrane fusion protein (MFP) (TC 8.A.1) family. In terms of assembly, part of a tripartite efflux system composed of MdtA, MdtB and MdtC.

The protein resides in the cell inner membrane. The chain is Multidrug resistance protein MdtA from Yersinia pestis bv. Antiqua (strain Antiqua).